The sequence spans 331 residues: Quinone oxidoreductase (331 aa).

A2 carries the N-acetylalanine modification. K23 carries the post-translational modification N6-acetyllysine. S35 is subject to Phosphoserine. Residues Y53, 158 to 161 (SGGV), and G181 contribute to the NADP(+) site. N6-acetyllysine is present on K186. NADP(+) is bound by residues H200, N231, 248–251 (VGCR), and 271–273 (VSL). Position 298 is an N6-succinyllysine (K298).

It belongs to the zinc-containing alcohol dehydrogenase family. Quinone oxidoreductase subfamily. In terms of assembly, homotetramer.

Its subcellular location is the cytoplasm. It carries out the reaction 2 a quinone + NADPH + H(+) = 2 a 1,4-benzosemiquinone + NADP(+). Functionally, does not have alcohol dehydrogenase activity. Binds NADP and acts through a one-electron transfer process. Orthoquinones, such as 1,2-naphthoquinone or 9,10-phenanthrenequinone, are the best substrates (in vitro). May act in the detoxification of xenobiotics. Interacts with (AU)-rich elements (ARE) in the 3'-UTR of target mRNA species and enhances their stability. NADPH binding interferes with mRNA binding. In Mus musculus (Mouse), this protein is Quinone oxidoreductase (Cryz).